Reading from the N-terminus, the 393-residue chain is Na(+)/H(+) antiporter NhaA (393 aa).

11 consecutive transmembrane segments (helical) span residues 18–38, 65–85, 101–121, 131–151, 160–180, 184–204, 210–230, 260–280, 298–318, 334–354, and 369–389; these read AGGVLLALSALVALVISNSPW, MLIWINDLWMAVFFFLVGLEI, MLPAVAALGGMAVPALIYAAI, GWGIPMATDIAFALGLLVLLG, VFLTAVAIIDDLGAILVIAFF, NLSPTMLLAAGLGALVLLGLN, AVGPYVVVGLVIWVCVLKSGI, ALQPWVAFLVLPVFAFANAGV, IAFGLLIGKPIGVFGASWLLI, FFGVCVLCGVGFTMSLFIGSL, and IGVLLGSLLSGAAGVALLLAS.

Belongs to the NhaA Na(+)/H(+) (TC 2.A.33) antiporter family.

Its subcellular location is the cell inner membrane. The catalysed reaction is Na(+)(in) + 2 H(+)(out) = Na(+)(out) + 2 H(+)(in). Its function is as follows. Na(+)/H(+) antiporter that extrudes sodium in exchange for external protons. This Albidiferax ferrireducens (strain ATCC BAA-621 / DSM 15236 / T118) (Rhodoferax ferrireducens) protein is Na(+)/H(+) antiporter NhaA.